The sequence spans 404 residues: Dual-specificity RNA methyltransferase RlmN (404 aa).

Glu119 acts as the Proton acceptor in catalysis. The Radical SAM core domain maps to 126-358 (VGRAGALCVS…NKAGYSSPIR (233 aa)). A disulfide bond links Cys133 and Cys369. Residues Cys140, Cys144, and Cys147 each contribute to the [4Fe-4S] cluster site. S-adenosyl-L-methionine is bound by residues 195-196 (GE), Ser227, 249-251 (SLH), and Asn326. Cys369 (S-methylcysteine intermediate) is an active-site residue.

The protein belongs to the radical SAM superfamily. RlmN family. Requires [4Fe-4S] cluster as cofactor.

It is found in the cytoplasm. It catalyses the reaction adenosine(2503) in 23S rRNA + 2 reduced [2Fe-2S]-[ferredoxin] + 2 S-adenosyl-L-methionine = 2-methyladenosine(2503) in 23S rRNA + 5'-deoxyadenosine + L-methionine + 2 oxidized [2Fe-2S]-[ferredoxin] + S-adenosyl-L-homocysteine. The enzyme catalyses adenosine(37) in tRNA + 2 reduced [2Fe-2S]-[ferredoxin] + 2 S-adenosyl-L-methionine = 2-methyladenosine(37) in tRNA + 5'-deoxyadenosine + L-methionine + 2 oxidized [2Fe-2S]-[ferredoxin] + S-adenosyl-L-homocysteine. In terms of biological role, specifically methylates position 2 of adenine 2503 in 23S rRNA and position 2 of adenine 37 in tRNAs. m2A2503 modification seems to play a crucial role in the proofreading step occurring at the peptidyl transferase center and thus would serve to optimize ribosomal fidelity. The protein is Dual-specificity RNA methyltransferase RlmN of Caulobacter sp. (strain K31).